The primary structure comprises 332 residues: Glycerol-3-phosphate dehydrogenase [NAD(P)+] (332 aa).

The NADPH site is built by Ser11, Trp12, Lys32, and Lys106. Residues Lys106, Gly137, and Ser139 each coordinate sn-glycerol 3-phosphate. Ala141 contributes to the NADPH binding site. Sn-glycerol 3-phosphate-binding residues include Lys192, Asp245, Ser255, Arg256, and Asn257. Residue Lys192 is the Proton acceptor of the active site. Arg256 is an NADPH binding site. Val280 and Glu282 together coordinate NADPH.

Belongs to the NAD-dependent glycerol-3-phosphate dehydrogenase family.

The protein localises to the cytoplasm. It catalyses the reaction sn-glycerol 3-phosphate + NAD(+) = dihydroxyacetone phosphate + NADH + H(+). It carries out the reaction sn-glycerol 3-phosphate + NADP(+) = dihydroxyacetone phosphate + NADPH + H(+). It functions in the pathway membrane lipid metabolism; glycerophospholipid metabolism. In terms of biological role, catalyzes the reduction of the glycolytic intermediate dihydroxyacetone phosphate (DHAP) to sn-glycerol 3-phosphate (G3P), the key precursor for phospholipid synthesis. The chain is Glycerol-3-phosphate dehydrogenase [NAD(P)+] from Macrococcus caseolyticus (strain JCSC5402) (Macrococcoides caseolyticum).